We begin with the raw amino-acid sequence, 197 residues long: CASP-like protein 0U1 (197 aa).

At 1–13 (MDDFDPTVTNSPK) the chain is on the cytoplasmic side. Residues 14–34 (FRLIAVQCLFSITAFAAMLSQ) traverse the membrane as a helical segment. Topologically, residues 35 to 63 (RHGLAGPDEMTLEECGPQACGYQKFSNFK) are extracellular. A helical transmembrane segment spans residues 64–84 (FLIAVCIIYAVFSLVVMAAYL). Topologically, residues 85–99 (LQRVPPPVTELTAYT) are cytoplasmic. A helical membrane pass occupies residues 100-120 (VMNVLLFAAFAMSATSCNITI). Residues 121–135 (VDPVYPVCKRATSAK) are Extracellular-facing. The chain crosses the membrane as a helical span at residues 136–156 (ASIAFAFFTWLAVCFSMLFTY). The Cytoplasmic portion of the chain corresponds to 157–197 (KEWRDVDYHVPGSGAYEFVPGVTSGSSRSSYPPQASSSSYA). The tract at residues 178–197 (VTSGSSRSSYPPQASSSSYA) is disordered. Residues 180–197 (SGSSRSSYPPQASSSSYA) are compositionally biased toward low complexity.

Belongs to the Casparian strip membrane proteins (CASP) family. In terms of assembly, homodimer and heterodimers.

The protein localises to the cell membrane. The polypeptide is CASP-like protein 0U1 (Micromonas commoda (strain RCC299 / NOUM17 / CCMP2709) (Picoplanktonic green alga)).